The primary structure comprises 1391 residues: CAP-Gly domain-containing linker protein 1 (1391 aa).

The interval 1 to 53 (MSMLKPSGLKAPTKILKPGSTALKTPAAAAAPVEKTIPSEKASGPPSSETQEE) is disordered. S48 carries the post-translational modification Phosphoserine. At T50 the chain carries Phosphothreonine. Residues 78–120 (GETQFAPGQWAGIVLDEPIGKNDGSVAGVRYFQCEPLKGIFTR) form the CAP-Gly 1 domain. An important for tubulin binding region spans residues 97–101 (GKNDG). Residues 129 to 182 (QAEDEANGLQAAPGRTASPLSTAAATMVSSSPATPSNIPHKPSQSTAKEPSATP) form a disordered region. At S146 the chain carries Phosphoserine. Over residues 146-182 (SPLSTAAATMVSSSPATPSNIPHKPSQSTAKEPSATP) the composition is skewed to polar residues. A Phosphothreonine modification is found at T181. Phosphoserine occurs at positions 194, 196, 199, and 203. Residues 231–273 (GETDFAKGEWCGVELDEPLGKNDGAVAGTRYFQCQPKYGLFAP) form the CAP-Gly 2 domain. Residues 302 to 331 (TPASLKRSPSASSLSSMSSVASSVSSKPSR) are compositionally biased toward low complexity. The tract at residues 302-336 (TPASLKRSPSASSLSSMSSVASSVSSKPSRTGLLT) is disordered. At S309 the chain carries Phosphoserine. Residue S311 is modified to Phosphoserine; by PKA. Phosphoserine occurs at positions 314, 347, and 1189. The stretch at 349-1306 (TTALQEALKE…VEMMSEAALN (958 aa)) forms a coiled coil. Residues 1251–1272 (KRQLSSSSGNTDAQAEEDERAQ) form a disordered region. At S1317 the chain carries Phosphoserine. The CCHC-type zinc-finger motif lies at 1370-1387 (PYCEICEMFGHWATNCND).

Interacts with MTOR; phosphorylates and regulates CLIP1. Interacts (via CAP-Gly domains) with tubulin. Interacts with SLAIN2. Interacts with TUBA1B, MAPRE1 and MAPRE3. Interacts (via zinc finger) with DCTN1. Binds preferentially to tyrosinated microtubules, and only marginally to detyrosinated microtubules. Post-translationally, phosphorylated. Phosphorylation induces conformational changes by increasing the affinity of the N-terminus for C-terminus, resulting in inhibition of its function thus decreasing its binding to microtubules and DCTN1. Exhibits a folded, autoinhibited conformation when phosphorylated and an open conformation when dephosphorylated with increased binding affinity to microtubules and DCTN1. Phosphorylation regulates its recruitment to tyrosinated microtubules and the recruitment of vesicular cargo to microtubules in neurons. Phosphorylation by MTOR may positively regulate CLIP1 association with microtubules. As to expression, expressed in the testes (at protein level).

It is found in the cytoplasm. It localises to the cytoskeleton. The protein resides in the cytoplasmic vesicle membrane. The protein localises to the cell projection. Its subcellular location is the ruffle. Its function is as follows. Binds to the plus end of microtubules and regulates the dynamics of the microtubule cytoskeleton. Promotes microtubule growth and microtubule bundling. Links cytoplasmic vesicles to microtubules and thereby plays an important role in intracellular vesicle trafficking. Plays a role macropinocytosis and endosome trafficking. This Mus musculus (Mouse) protein is CAP-Gly domain-containing linker protein 1 (Clip1).